Here is a 332-residue protein sequence, read N- to C-terminus: UDP-3-O-acylglucosamine N-acyltransferase (332 aa).

H231 (proton acceptor) is an active-site residue.

This sequence belongs to the transferase hexapeptide repeat family. LpxD subfamily. As to quaternary structure, homotrimer.

The enzyme catalyses a UDP-3-O-[(3R)-3-hydroxyacyl]-alpha-D-glucosamine + a (3R)-hydroxyacyl-[ACP] = a UDP-2-N,3-O-bis[(3R)-3-hydroxyacyl]-alpha-D-glucosamine + holo-[ACP] + H(+). The protein operates within bacterial outer membrane biogenesis; LPS lipid A biosynthesis. Its function is as follows. Catalyzes the N-acylation of UDP-3-O-acylglucosamine using 3-hydroxyacyl-ACP as the acyl donor. Is involved in the biosynthesis of lipid A, a phosphorylated glycolipid that anchors the lipopolysaccharide to the outer membrane of the cell. This chain is UDP-3-O-acylglucosamine N-acyltransferase, found in Vesicomyosocius okutanii subsp. Calyptogena okutanii (strain HA).